Consider the following 279-residue polypeptide: Tryptophan synthase alpha chain (279 aa).

Catalysis depends on proton acceptor residues E50 and D61.

It belongs to the TrpA family. In terms of assembly, tetramer of two alpha and two beta chains.

The catalysed reaction is (1S,2R)-1-C-(indol-3-yl)glycerol 3-phosphate + L-serine = D-glyceraldehyde 3-phosphate + L-tryptophan + H2O. The protein operates within amino-acid biosynthesis; L-tryptophan biosynthesis; L-tryptophan from chorismate: step 5/5. Functionally, the alpha subunit is responsible for the aldol cleavage of indoleglycerol phosphate to indole and glyceraldehyde 3-phosphate. In Methylobacterium radiotolerans (strain ATCC 27329 / DSM 1819 / JCM 2831 / NBRC 15690 / NCIMB 10815 / 0-1), this protein is Tryptophan synthase alpha chain.